We begin with the raw amino-acid sequence, 226 residues long: UPF0111 protein PH0637 (226 aa).

The protein belongs to the UPF0111 family.

This Pyrococcus horikoshii (strain ATCC 700860 / DSM 12428 / JCM 9974 / NBRC 100139 / OT-3) protein is UPF0111 protein PH0637.